The chain runs to 240 residues: tRNA pseudouridine synthase B (240 aa).

The active-site Nucleophile is Asp-54.

This sequence belongs to the pseudouridine synthase TruB family. Type 1 subfamily.

It carries out the reaction uridine(55) in tRNA = pseudouridine(55) in tRNA. In terms of biological role, responsible for synthesis of pseudouridine from uracil-55 in the psi GC loop of transfer RNAs. In Chlorobium phaeovibrioides (strain DSM 265 / 1930) (Prosthecochloris vibrioformis (strain DSM 265)), this protein is tRNA pseudouridine synthase B.